The sequence spans 380 residues: Ribosomal RNA large subunit methyltransferase F (380 aa).

The tract at residues 1 to 32 (MSHKTKPSTQERKAGKPSAPKRKVISKSPNSK) is disordered.

It belongs to the methyltransferase superfamily. METTL16/RlmF family.

The protein localises to the cytoplasm. It catalyses the reaction adenosine(1618) in 23S rRNA + S-adenosyl-L-methionine = N(6)-methyladenosine(1618) in 23S rRNA + S-adenosyl-L-homocysteine + H(+). Functionally, specifically methylates the adenine in position 1618 of 23S rRNA. The chain is Ribosomal RNA large subunit methyltransferase F from Shewanella halifaxensis (strain HAW-EB4).